A 360-amino-acid chain; its full sequence is MSSPVTAQRPPAAPPLIAVDAMGGDHAPREIVAGAVRAVREHGLRLALVGRSSELAPLVAAEQAARELPIVHAEEALAMHEGALAAWRRARSSVAVGCKLVRQGTAAALVSAGSTGGVVSTATVRLRTLPGVLRPALALVLPTTPTPTILLDAGANADAKPEMLVQFAHLGAAYARVGHGIAEPRVGILTIGSEPGKGNKLARRAAELLSANATEDRLDFRGNIEGHDLLAGLVDVVVTDGFTGNVALKSVEGAVRFAFDEIRAALTSSPLARFGTLFQRRALRELRTRFDSETYGGAVLLGLNGTVVIAHGASRAEGIAHACLLAHNLVVGRITDQIRRGIAGVSRTPSWLHRLSAPEE.

Belongs to the PlsX family. As to quaternary structure, homodimer. Probably interacts with PlsY.

Its subcellular location is the cytoplasm. It catalyses the reaction a fatty acyl-[ACP] + phosphate = an acyl phosphate + holo-[ACP]. Its pathway is lipid metabolism; phospholipid metabolism. In terms of biological role, catalyzes the reversible formation of acyl-phosphate (acyl-PO(4)) from acyl-[acyl-carrier-protein] (acyl-ACP). This enzyme utilizes acyl-ACP as fatty acyl donor, but not acyl-CoA. The protein is Phosphate acyltransferase of Thermobifida fusca (strain YX).